The sequence spans 385 residues: Putative cell agglutination protein pfl8 (385 aa).

The N-terminal stretch at 1-20 (MNSYISLIFTLLFFTSAARS) is a signal peptide. Positions 41 to 90 (SSEFTSTITPETPSSSSSTFVPISTHTSSATNTTSGQLSISSSSSTSSEY) are disordered. 3 N-linked (GlcNAc...) asparagine glycosylation sites follow: Asn72, Asn270, and Asn346. The PA14 domain occupies 196–360 (EVSTFNKPAY…GPVRTTSYSY (165 aa)).

The protein localises to the secreted. It is found in the cell surface. Its function is as follows. May be involved in agglutination during conjugation or other aspects of colony formation. Induces flocculation when overexpressed. The polypeptide is Putative cell agglutination protein pfl8 (Schizosaccharomyces pombe (strain 972 / ATCC 24843) (Fission yeast)).